A 954-amino-acid polypeptide reads, in one-letter code: Endoplasmic reticulum aminopeptidase 2 (954 aa).

Residues 1 to 7 (MANSCRK) are Cytoplasmic-facing. A helical; Signal-anchor for type II membrane protein membrane pass occupies residues 8-28 (LIFNIYVVFYCSAVIMPQICI). Topologically, residues 29–954 (CSQFTSSPID…TLRKWLLTSI (926 aa)) are lumenal. Residues N79 and N113 are each glycosylated (N-linked (GlcNAc...) asparagine). Residues E194 and 328–332 (GAMEN) contribute to the substrate site. H364 provides a ligand contact to Zn(2+). The Proton acceptor role is filled by E365. Positions 368 and 387 each coordinate Zn(2+). N-linked (GlcNAc...) asparagine glycosylation is present at N399. An intrachain disulfide couples C415 to C454. A glycan (N-linked (GlcNAc...) asparagine) is linked at N644. C753 and C760 are oxidised to a cystine.

Belongs to the peptidase M1 family. As to quaternary structure, heterodimer with ERAP1. Zn(2+) serves as cofactor. Post-translationally, N-glycosylated.

It is found in the endoplasmic reticulum membrane. Aminopeptidase that plays a central role in peptide trimming, a step required for the generation of most HLA class I-binding peptides. Peptide trimming is essential to customize longer precursor peptides to fit them to the correct length required for presentation on MHC class I molecules. Preferentially hydrolyzes the basic residues Arg and Lys. This is Endoplasmic reticulum aminopeptidase 2 (ERAP2) from Bos taurus (Bovine).